We begin with the raw amino-acid sequence, 315 residues long: MDGVVIKNTGSQYLVRCTDGTELYCMAKGNLRLKGIRSTNPVTVGDRVEIVPASQDGQPAYIKRIHPRRNYIIRRASNLSKESHILGANLDAAVLVCTINDPVTTTVFIDRFLATAEAYRVPVILVFNKIDCYTQEDRLQLDRLSAVYTAIGYPCCHVSAITGEGLPDLKSLLDGKLTLLAGHSGVGKSSLINALIPHADLRTGAISQAHHTGMHTTTFSQMIDFPDLSPGSALIDTPGIKGFGTLEMGEYEVSHYFPEIFAASKGCRFGNCTHTHEPGCAVLEALRRGEIAESRYISYLSILEDENAERYRPEY.

Residues Leu79 to Phe243 form the CP-type G domain. GTP is bound by residues Asn128–Asp131 and Gly182–Ser190. Zn(2+) is bound by residues Cys267, Cys272, His274, and Cys280.

It belongs to the TRAFAC class YlqF/YawG GTPase family. RsgA subfamily. As to quaternary structure, monomer. Associates with 30S ribosomal subunit, binds 16S rRNA. The cofactor is Zn(2+).

Its subcellular location is the cytoplasm. In terms of biological role, one of several proteins that assist in the late maturation steps of the functional core of the 30S ribosomal subunit. Helps release RbfA from mature subunits. May play a role in the assembly of ribosomal proteins into the subunit. Circularly permuted GTPase that catalyzes slow GTP hydrolysis, GTPase activity is stimulated by the 30S ribosomal subunit. The protein is Small ribosomal subunit biogenesis GTPase RsgA of Porphyromonas gingivalis (strain ATCC BAA-308 / W83).